A 101-amino-acid polypeptide reads, in one-letter code: Urease subunit beta (101 aa).

It belongs to the urease beta subunit family. Heterotrimer of UreA (gamma), UreB (beta) and UreC (alpha) subunits. Three heterotrimers associate to form the active enzyme.

Its subcellular location is the cytoplasm. It catalyses the reaction urea + 2 H2O + H(+) = hydrogencarbonate + 2 NH4(+). The protein operates within nitrogen metabolism; urea degradation; CO(2) and NH(3) from urea (urease route): step 1/1. The protein is Urease subunit beta of Haemophilus influenzae (strain 86-028NP).